The primary structure comprises 318 residues: Transaldolase (318 aa).

Lysine 132 acts as the Schiff-base intermediate with substrate in catalysis.

The protein belongs to the transaldolase family. Type 1 subfamily. In terms of assembly, homodimer.

It is found in the cytoplasm. It carries out the reaction D-sedoheptulose 7-phosphate + D-glyceraldehyde 3-phosphate = D-erythrose 4-phosphate + beta-D-fructose 6-phosphate. Its pathway is carbohydrate degradation; pentose phosphate pathway; D-glyceraldehyde 3-phosphate and beta-D-fructose 6-phosphate from D-ribose 5-phosphate and D-xylulose 5-phosphate (non-oxidative stage): step 2/3. Transaldolase is important for the balance of metabolites in the pentose-phosphate pathway. The chain is Transaldolase from Shewanella putrefaciens (strain CN-32 / ATCC BAA-453).